A 138-amino-acid polypeptide reads, in one-letter code: Small ribosomal subunit protein uS11c (138 aa).

A disordered region spans residues 1-22 (MTKPIPRIGSRRSGRIGSRKAG). The segment covering 9–22 (GSRRSGRIGSRKAG) has biased composition (basic residues).

Belongs to the universal ribosomal protein uS11 family. Part of the 30S ribosomal subunit.

It localises to the plastid. It is found in the chloroplast. This Piper cenocladum (Ant piper) protein is Small ribosomal subunit protein uS11c.